We begin with the raw amino-acid sequence, 438 residues long: Trigger factor (438 aa).

A PPIase FKBP-type domain is found at Gly162–Pro247.

The protein belongs to the FKBP-type PPIase family. Tig subfamily.

It localises to the cytoplasm. The enzyme catalyses [protein]-peptidylproline (omega=180) = [protein]-peptidylproline (omega=0). Involved in protein export. Acts as a chaperone by maintaining the newly synthesized protein in an open conformation. Functions as a peptidyl-prolyl cis-trans isomerase. In Caldicellulosiruptor bescii (strain ATCC BAA-1888 / DSM 6725 / KCTC 15123 / Z-1320) (Anaerocellum thermophilum), this protein is Trigger factor.